Reading from the N-terminus, the 66-residue chain is Large ribosomal subunit protein bL35 (66 aa).

The segment covering 1–15 (MSKMKTKSGAKKRFK) has biased composition (basic residues). The disordered stretch occupies residues 1–35 (MSKMKTKSGAKKRFKLTASGKVKAGQAGKRHGMIK).

It belongs to the bacterial ribosomal protein bL35 family.

The chain is Large ribosomal subunit protein bL35 from Maricaulis maris (strain MCS10) (Caulobacter maris).